The chain runs to 443 residues: ASTRA-associated protein 1 (443 aa).

WD repeat units follow at residues 23–67 (YHKR…PITH), 71–110 (EGNS…QLSI), 258–295 (HYPN…QLET), and 318–359 (KVHL…VEQT). A disordered region spans residues 372-391 (SSMGDLTNGSGSNTESSSKS). Positions 378-391 (TNGSGSNTESSSKS) are enriched in low complexity.

The protein belongs to the WD repeat ASA1 family. Component of the ASTRA chromatin remodeling machinery complex composed of at least RVB1, RVB2, TRA1, TEL2, TTI1 and TTI2.

The protein resides in the nucleus. Component of the ASTRA complex involved in chromatin remodeling. The protein is ASTRA-associated protein 1 (ASA1) of Saccharomyces cerevisiae (strain RM11-1a) (Baker's yeast).